We begin with the raw amino-acid sequence, 218 residues long: dTTP/UTP pyrophosphatase (218 aa).

Asp76 (proton acceptor) is an active-site residue.

It belongs to the Maf family. YhdE subfamily. A divalent metal cation is required as a cofactor.

It is found in the cytoplasm. The catalysed reaction is dTTP + H2O = dTMP + diphosphate + H(+). The enzyme catalyses UTP + H2O = UMP + diphosphate + H(+). In terms of biological role, nucleoside triphosphate pyrophosphatase that hydrolyzes dTTP and UTP. May have a dual role in cell division arrest and in preventing the incorporation of modified nucleotides into cellular nucleic acids. The protein is dTTP/UTP pyrophosphatase of Cytophaga hutchinsonii (strain ATCC 33406 / DSM 1761 / CIP 103989 / NBRC 15051 / NCIMB 9469 / D465).